A 633-amino-acid chain; its full sequence is Mitochondrial Rho GTPase 1 (633 aa).

Residues Met-1–His-170 form the Miro 1 domain. Residues Met-1–Lys-603 lie on the Cytoplasmic side of the membrane. GTP-binding positions include Gly-10 to Ser-17, Asp-59 to Leu-63, and Asn-115 to Asp-118. EF-hand domains lie at Ala-186–Lys-221 and Glu-306–Leu-341. Asp-199, Asp-201, Asp-203, Tyr-205, Glu-210, Asp-319, Asp-321, Asp-323, and Glu-330 together coordinate Ca(2+). Residues Asn-398–Gly-418 are disordered. The segment covering Thr-408–Gly-418 has biased composition (basic residues). The Miro 2 domain maps to Arg-422–Glu-588. GTP-binding positions include Gly-431–Ser-438, Glu-467–Gly-471, and Leu-537–Asp-540. Residues Trp-604–Ile-624 form a helical; Anchor for type IV membrane protein membrane-spanning segment. At Trp-625–Thr-633 the chain is on the mitochondrial intermembrane side.

The protein belongs to the mitochondrial Rho GTPase family.

The protein localises to the mitochondrion outer membrane. Its function is as follows. Mitochondrial GTPase involved in mitochondrial trafficking. Probably involved in control of anterograde transport of mitochondria and their subcellular distribution. The polypeptide is Mitochondrial Rho GTPase 1 (gem1) (Aspergillus oryzae (strain ATCC 42149 / RIB 40) (Yellow koji mold)).